We begin with the raw amino-acid sequence, 236 residues long: MGVEGCTKCIKYLLFVFNFVFWLAGGVILGVALWLRHDPQTTTLLYLELGDKPAPSTFYVGIYILIAVGAVMMFVGFLGCYGAIQESQCLLGTFFTCLVILFACEVAAGIWGFVNKDQIAKDVKQFYDQALQQAVMDDDANNAKAVVKTFHETLNCCGSNTLTTLTTAVLRNSLCPSSSNSFTQLLKEDCHQKIDELFSGKLYLIGIAAIVVAVIMIFEMILSMVLCCGIRNSSVY.

Residues 1–12 are Cytoplasmic-facing; sequence MGVEGCTKCIKY. A helical transmembrane segment spans residues 13–33; sequence LLFVFNFVFWLAGGVILGVAL. The Extracellular portion of the chain corresponds to 34–63; sequence WLRHDPQTTTLLYLELGDKPAPSTFYVGIY. A helical transmembrane segment spans residues 64-84; sequence ILIAVGAVMMFVGFLGCYGAI. Residues 85 to 89 lie on the Cytoplasmic side of the membrane; it reads QESQC. The chain crosses the membrane as a helical span at residues 90-112; the sequence is LLGTFFTCLVILFACEVAAGIWG. The Extracellular segment spans residues 113-201; the sequence is FVNKDQIAKD…QKIDELFSGK (89 aa). Intrachain disulfides connect Cys-156–Cys-190 and Cys-157–Cys-175. Residues 202-224 form a helical membrane-spanning segment; sequence LYLIGIAAIVVAVIMIFEMILSM. Glu-219 contacts cholesterol. At 225-236 the chain is on the cytoplasmic side; sequence VLCCGIRNSSVY.

Belongs to the tetraspanin (TM4SF) family. In terms of assembly, homodimer. Part of a complex composed of CD19, CR2/CD21, CD81 and IFITM1/CD225 in the membrane of mature B cells. Interacts (via the second extracellular domain) with CD19; this interaction is initiated early during biosynthesis in the ER and enables trafficking of only properly folded CD19. Part of a complex that includes MHC class II/HLA-DR molecules and IFITM1. Interacts with IFITM1. Interacts with IFITM2 and IFITM3. Part of integrin-tetraspanin complex composed of CD9, CD81, beta-1 and beta-2 integrins in the membrane of monocyte/macrophages. Interacts (via the second extracellular domain) with integrin ITGAV:ITGB3. Interacts with CD247/CD3 zeta, ICAM1 and CD9 at the immune synapse on T cell membrane. Part of a GPCR-tetraspanin complex consisting at least of ADGRG1, CD81, possibly CD9, and GNA11 in which CD81 enhances the association of ADGRG1 with GNA11. Part of a complex composed of CD9, CD81, PTGFRN and IGSF8. Interacts directly with IGSF8. Interacts with CD53 and SCIMP. Interacts with SAMHD1 (via its C-terminus). Interacts with glypican GPC3 and with the transcriptional repressor HHEX; binding to GPC3 decreases the availability of free CD81 for binding to HHEX, resulting in nuclear translocation of HHEX and transcriptional repression. Interacts with CLDN1. Interacts with CLDN6 and CLDN9. In terms of processing, not glycosylated. Likely constitutively palmitoylated at low levels. Protein palmitoylation is up-regulated upon coligation of BCR and CD9-C2R-CD81 complexes in lipid rafts.

The protein resides in the cell membrane. Its subcellular location is the basolateral cell membrane. In terms of biological role, structural component of specialized membrane microdomains known as tetraspanin-enriched microdomains (TERMs), which act as platforms for receptor clustering and signaling. Essential for trafficking and compartmentalization of CD19 receptor on the surface of activated B cells. Upon initial encounter with microbial pathogens, enables the assembly of CD19-CR2/CD21 and B cell receptor (BCR) complexes at signaling TERMs, lowering the threshold dose of antigen required to trigger B cell clonal expansion and antibody production. In T cells, facilitates the localization of CD247/CD3 zeta at antigen-induced synapses with B cells, providing for costimulation and polarization toward T helper type 2 phenotype. Present in MHC class II compartments, may also play a role in antigen presentation. Can act both as positive and negative regulator of homotypic or heterotypic cell-cell fusion processes. Positively regulates sperm-egg fusion and may be involved in acrosome reaction. In myoblasts, associates with CD9 and PTGFRN and inhibits myotube fusion during muscle regeneration. In macrophages, associates with CD9 and beta-1 and beta-2 integrins, and prevents macrophage fusion into multinucleated giant cells specialized in ingesting complement-opsonized large particles. Also prevents the fusion of mononuclear cell progenitors into osteoclasts in charge of bone resorption. May regulate the compartmentalization of enzymatic activities. In T cells, defines the subcellular localization of dNTPase SAMHD1 and permits its degradation by the proteasome, thereby controlling intracellular dNTP levels. Also involved in cell adhesion and motility. Positively regulates integrin-mediated adhesion of macrophages, particularly relevant for the inflammatory response in the lung. The polypeptide is CD81 antigen (Cd81) (Rattus norvegicus (Rat)).